The following is a 237-amino-acid chain: Large ribosomal subunit protein uL1 (237 aa).

The protein belongs to the universal ribosomal protein uL1 family. Part of the 50S ribosomal subunit.

Binds directly to 23S rRNA. The L1 stalk is quite mobile in the ribosome, and is involved in E site tRNA release. In terms of biological role, protein L1 is also a translational repressor protein, it controls the translation of the L11 operon by binding to its mRNA. The sequence is that of Large ribosomal subunit protein uL1 from Rickettsia typhi (strain ATCC VR-144 / Wilmington).